Reading from the N-terminus, the 510-residue chain is Probable cytochrome P450 312a1 (510 aa).

C455 is a heme binding site.

The protein belongs to the cytochrome P450 family. Requires heme as cofactor.

The protein resides in the endoplasmic reticulum membrane. Its subcellular location is the microsome membrane. Its function is as follows. May be involved in the metabolism of insect hormones and in the breakdown of synthetic insecticides. The protein is Probable cytochrome P450 312a1 (Cyp312a1) of Drosophila melanogaster (Fruit fly).